Here is a 498-residue protein sequence, read N- to C-terminus: L-ornithine N(5)-monooxygenase (498 aa).

FAD contacts are provided by residues 80 to 88 (ERQKQFAWH) and Gln-99. Lys-104 is a binding site for substrate. Val-165 is an FAD binding site. NADP(+)-binding positions include 251-254 (SGQS) and Arg-276. Substrate is bound by residues 290–293 (NEVF) and Asn-320. Residue 320–322 (NYS) participates in NADP(+) binding. 463-465 (SLL) lines the FAD pocket. Ser-466 is a binding site for substrate.

The protein belongs to the lysine N(6)-hydroxylase/L-ornithine N(5)-oxygenase family. As to quaternary structure, homotetramer. It depends on FAD as a cofactor.

The catalysed reaction is L-ornithine + NADPH + O2 = N(5)-hydroxy-L-ornithine + NADP(+) + H2O. It catalyses the reaction L-ornithine + NADH + O2 = N(5)-hydroxy-L-ornithine + NAD(+) + H2O. Its pathway is siderophore biosynthesis. Functionally, catalyzes the conversion of L-ornithine to N(5)-hydroxyornithine, the first step in the biosynthesis of all hydroxamate-containing siderophores, such as the secreted triacetylfusarinine C (TAFC) involved in iron uptake and the intracellular iron storage compound desferriferricrocin (DFFC). The sequence is that of L-ornithine N(5)-monooxygenase from Emericella nidulans (strain FGSC A4 / ATCC 38163 / CBS 112.46 / NRRL 194 / M139) (Aspergillus nidulans).